Reading from the N-terminus, the 452-residue chain is Phosphoglucosamine mutase (452 aa).

The active-site Phosphoserine intermediate is Ser-98. The Mg(2+) site is built by Ser-98, Asp-239, Asp-241, and Asp-243. The residue at position 98 (Ser-98) is a Phosphoserine.

This sequence belongs to the phosphohexose mutase family. The cofactor is Mg(2+). Post-translationally, activated by phosphorylation.

The catalysed reaction is alpha-D-glucosamine 1-phosphate = D-glucosamine 6-phosphate. Its function is as follows. Catalyzes the conversion of glucosamine-6-phosphate to glucosamine-1-phosphate. This Anaplasma marginale (strain Florida) protein is Phosphoglucosamine mutase.